Consider the following 925-residue polypeptide: Collagen alpha-2(I) chain (925 aa).

A disordered region spans residues 1-925 (SGGFDFSFLP…FGYEGDFYRA (925 aa)). A 4-hydroxyproline mark is found at Pro-10 and Pro-13. Gly residues predominate over residues 22 to 34 (RYYGVGLGPGPMG). A compositionally biased stretch (low complexity) spans 35-74 (LMGPRGPPGASGAPGPQGFQGPAGEPGEPGQTGPAGARGP). 4-hydroxyproline occurs at positions 42 and 48. At Lys-103 the chain carries 5-hydroxylysine; alternate. Residue Lys-103 is glycosylated (O-linked (Gal...) hydroxylysine; alternate). Positions 154–171 (DGSVGPVGPAGPIGSAGP) are enriched in low complexity. Gly residues predominate over residues 271-280 (GESGGKGEPG). Positions 281–291 (SAGPQGPPGSS) are enriched in low complexity. Over residues 306 to 315 (GLRGGPGSRG) the composition is skewed to gly residues. 4-hydroxyproline occurs at positions 317, 332, and 335. The segment covering 363 to 379 (IDGRPGPIGPAGARGEA) has biased composition (low complexity). A compositionally biased stretch (gly residues) spans 423–432 (GVQGGKGEQG). Low complexity-rich tracts occupy residues 479 to 496 (PGES…SRGP) and 508 to 518 (EPGVVGAPGTA). Gly residues predominate over residues 519 to 528 (GPAGSGGLPG). Composition is skewed to low complexity over residues 551–595 (VGTT…PRGS) and 602–622 (VGPA…QPGA). A compositionally biased stretch (basic and acidic residues) spans 623-632 (KGERGTKGPK). Low complexity predominate over residues 640-650 (PTGPVGSAGPA). Positions 660-669 (GSRGDGGPPG) are enriched in gly residues. The span at 671–680 (TGFPGAAGRT) shows a compositional bias: low complexity. The segment covering 696 to 718 (GAAGKGDQGPVGRGETGAGGPPG) has biased composition (gly residues). Low complexity-rich tracts occupy residues 719 to 753 (FTGE…LGLP) and 761 to 771 (LPGVAGAVGEP). Residues 772–782 (GPLGIGPPGAR) show a composition bias toward gly residues. Over residues 791–806 (EPGPVGSVGPVGALGP) the composition is skewed to low complexity. The span at 816-827 (RGDKGEPGEKGP) shows a compositional bias: basic and acidic residues. Pro residues predominate over residues 897-907 (PAGPPGPPGPP).

The protein belongs to the fibrillar collagen family. In terms of assembly, trimers of one alpha 2(I) and two alpha 1(I) chains. Interacts (via C-terminus) with TMEM131 (via PapD-L domain); the interaction is direct and is involved in assembly and TRAPPIII ER-to-Golgi transport complex-dependent secretion of collagen. In terms of processing, prolines at the third position of the tripeptide repeating unit (G-X-Y) are hydroxylated in some or all of the chains. In terms of tissue distribution, expressed in bones.

The protein resides in the secreted. Its subcellular location is the extracellular space. It is found in the extracellular matrix. In terms of biological role, type I collagen is a member of group I collagen (fibrillar forming collagen). This is Collagen alpha-2(I) chain from Acratocnus sp. (strain SLP-2019) (Ground sloth).